The chain runs to 169 residues: Inorganic pyrophosphatase (169 aa).

Lys-26, Arg-40, and Tyr-52 together coordinate substrate. The Mg(2+) site is built by Asp-62, Asp-67, and Asp-99. Tyr-138 contributes to the substrate binding site.

The protein belongs to the PPase family. As to quaternary structure, homohexamer. The cofactor is Mg(2+).

The protein resides in the cytoplasm. It carries out the reaction diphosphate + H2O = 2 phosphate + H(+). Its function is as follows. Catalyzes the hydrolysis of inorganic pyrophosphate (PPi) forming two phosphate ions. The protein is Inorganic pyrophosphatase of Thermoplasma volcanium (strain ATCC 51530 / DSM 4299 / JCM 9571 / NBRC 15438 / GSS1).